Reading from the N-terminus, the 725-residue chain is MVEIDFNKENEEDFSDPPGFVDDVTDDVLVPDVLHKKPTIDEFEDNCVFIAGIPVVGADRLGKLQSVLKKVLERLDPAVKLYIPPSPEGGCLGVLLTEWADQRSAQFAVKSLNGYAFDKNHTFTARSFKDMKQLEAPSDHWTTPEKQAYNDVGDLWWWLQNERCRDQFAISHDKLGVPTVGVFTNMKGNDPELAGDADKAERANWTETVFTWSPHGSYLSTIHKQGIILWGGKDYARAHRFAHTNVQYIDFSPCETYLVTYAAPEESNSWGDCEKDSLRIWDVRTGELKKAFSTFELTGRTQLPTWPFFRWSFDEKYFACLKAPEKDKLEREQKINGISIFESEKFELYEGRPVNIENIKQFEWSPTSTVLAYYSECTDAVPAEFGLLQVPSMQRLRSARVHNVADAQMFWQKSGKRLAFYTMRFKKKEYRETGEVKYVGGCQYHVDIFEIDKKDVSLMNLPLSEPFIHFDWDPEGDKFCVLVGNTAKATPQVYKIEANSHAPKLVSKLDAGVHFNEVQFAPKGGWLAVLAKVSAGGNVYFIDTSLSEAKRTNVIEHPLFNKGYWDPTGRYFVTCSTLGGRAGADLGYRIFTFQGRELCRKNLDRLAQFKWRPRPPVKLSEQKQREIKKNLKKTAAKFIKQDDDEKCRASQEVVEKRRKIMAAFDIIRSRNREQLDATRDERISLRNGVDTEAQLDEDEFVDEEITIALSTSKTQAPLTEEEMRD.

The RRM domain occupies 46 to 130 (NCVFIAGIPV…HTFTARSFKD (85 aa)). WD repeat units lie at residues 202-240 (RANW…RAHR), 242-280 (AHTN…SLRI), 354-395 (VNIE…SMQR), 462-504 (PLSE…HAPK), 510-552 (DAGV…AKRT), and 554-594 (VIEH…FTFQ).

It belongs to the eIF-3 subunit B family. As to quaternary structure, component of the eukaryotic translation initiation factor 3 (eIF-3) complex.

The protein resides in the cytoplasm. Functionally, RNA-binding component of the eukaryotic translation initiation factor 3 (eIF-3) complex, which is involved in protein synthesis of a specialized repertoire of mRNAs and, together with other initiation factors, stimulates binding of mRNA and methionyl-tRNAi to the 40S ribosome. The eIF-3 complex specifically targets and initiates translation of a subset of mRNAs involved in cell proliferation. This chain is Eukaryotic translation initiation factor 3 subunit B, found in Caenorhabditis elegans.